Here is a 904-residue protein sequence, read N- to C-terminus: DNA mismatch repair protein MutS (904 aa).

Position 654 to 661 (Gly-654 to Ser-661) interacts with ATP.

Belongs to the DNA mismatch repair MutS family.

Its function is as follows. This protein is involved in the repair of mismatches in DNA. It is possible that it carries out the mismatch recognition step. This protein has a weak ATPase activity. This chain is DNA mismatch repair protein MutS, found in Caulobacter sp. (strain K31).